The chain runs to 352 residues: Holliday junction branch migration complex subunit RuvB (352 aa).

A disordered region spans residues 1–26; that stretch reads MIETDKLRAAAPERLISPQPADRQED. Residues 4 to 193 form a large ATPase domain (RuvB-L) region; that stretch reads TDKLRAAAPE…FGIVSRLEFY (190 aa). ATP is bound by residues Leu32, Arg33, Gly74, Lys77, Thr78, Thr79, 140 to 142, Arg183, Tyr193, and Arg230; that span reads EDF. Thr78 lines the Mg(2+) pocket. The segment at 194 to 264 is small ATPAse domain (RuvB-S); sequence TPDELGFIVS…VADAALRMLD (71 aa). Positions 267–352 are head domain (RuvB-H); the sequence is SLGLDLMDRK…RPGGTDLFGG (86 aa). DNA is bound by residues Arg322 and Arg327.

Belongs to the RuvB family. As to quaternary structure, homohexamer. Forms an RuvA(8)-RuvB(12)-Holliday junction (HJ) complex. HJ DNA is sandwiched between 2 RuvA tetramers; dsDNA enters through RuvA and exits via RuvB. An RuvB hexamer assembles on each DNA strand where it exits the tetramer. Each RuvB hexamer is contacted by two RuvA subunits (via domain III) on 2 adjacent RuvB subunits; this complex drives branch migration. In the full resolvosome a probable DNA-RuvA(4)-RuvB(12)-RuvC(2) complex forms which resolves the HJ.

The protein localises to the cytoplasm. The catalysed reaction is ATP + H2O = ADP + phosphate + H(+). Its function is as follows. The RuvA-RuvB-RuvC complex processes Holliday junction (HJ) DNA during genetic recombination and DNA repair, while the RuvA-RuvB complex plays an important role in the rescue of blocked DNA replication forks via replication fork reversal (RFR). RuvA specifically binds to HJ cruciform DNA, conferring on it an open structure. The RuvB hexamer acts as an ATP-dependent pump, pulling dsDNA into and through the RuvAB complex. RuvB forms 2 homohexamers on either side of HJ DNA bound by 1 or 2 RuvA tetramers; 4 subunits per hexamer contact DNA at a time. Coordinated motions by a converter formed by DNA-disengaged RuvB subunits stimulates ATP hydrolysis and nucleotide exchange. Immobilization of the converter enables RuvB to convert the ATP-contained energy into a lever motion, pulling 2 nucleotides of DNA out of the RuvA tetramer per ATP hydrolyzed, thus driving DNA branch migration. The RuvB motors rotate together with the DNA substrate, which together with the progressing nucleotide cycle form the mechanistic basis for DNA recombination by continuous HJ branch migration. Branch migration allows RuvC to scan DNA until it finds its consensus sequence, where it cleaves and resolves cruciform DNA. In Azoarcus sp. (strain BH72), this protein is Holliday junction branch migration complex subunit RuvB.